The sequence spans 189 residues: Effector protein NleF (189 aa).

An interaction with host caspases region spans residues 186–189 (LQCG).

Monomer. Interacts (via C-terminus) with human CASP4, CASP8 and CASP9.

The protein resides in the secreted. The protein localises to the host cytoplasm. In terms of biological role, effector protein that alters host cell physiology and promotes bacterial survival in host tissues. Inhibits the catalytic activity of human CASP4, CASP8 and CASP9, and thereby inhibits apoptosis of infected host cells. This Escherichia coli O157:H7 protein is Effector protein NleF (nleF).